Consider the following 365-residue polypeptide: 2-aminoethylphosphonate--pyruvate transaminase (365 aa).

N6-(pyridoxal phosphate)lysine is present on Lys-194.

It belongs to the class-V pyridoxal-phosphate-dependent aminotransferase family. PhnW subfamily. Homodimer. Pyridoxal 5'-phosphate is required as a cofactor.

It carries out the reaction (2-aminoethyl)phosphonate + pyruvate = phosphonoacetaldehyde + L-alanine. Its function is as follows. Involved in phosphonate degradation. This is 2-aminoethylphosphonate--pyruvate transaminase from Bacillus thuringiensis subsp. konkukian (strain 97-27).